The chain runs to 143 residues: Transcriptional regulator MraZ (143 aa).

SpoVT-AbrB domains lie at 5–47 (TYTP…PRAA) and 76–119 (TDEQ…DAQA).

The protein belongs to the MraZ family. As to quaternary structure, forms oligomers.

Its subcellular location is the cytoplasm. The protein resides in the nucleoid. In Mycobacterium bovis (strain ATCC BAA-935 / AF2122/97), this protein is Transcriptional regulator MraZ.